Reading from the N-terminus, the 199-residue chain is Twist-related protein 1 (199 aa).

Positions Met-1–Ser-18 are enriched in low complexity. Residues Met-1–Glu-102 form a disordered region. Over residues Arg-34–Arg-43 the composition is skewed to basic residues. Gly residues-rich tracts occupy residues Ala-46–Glu-65 and Gly-80–Ser-96. Positions Thr-105–Leu-156 constitute a bHLH domain. Positions Gln-158–Arg-188 are sufficient for transactivation activity.

Efficient DNA binding requires dimerization with another bHLH protein. Homodimer or heterodimer with E proteins such as TCF3. ID1 binds preferentially to TCF3 but does not interact efficiently with TWIST1 so ID1 levels control the amount of TCF3 available to dimerize with TWIST and thus determine the type of dimer formed.

The protein localises to the nucleus. Acts as a transcriptional regulator. Inhibits myogenesis by sequestrating E proteins, inhibiting trans-activation by MEF2, and inhibiting DNA-binding by MYOD1 through physical interaction. This interaction probably involves the basic domains of both proteins. Also represses expression of pro-inflammatory cytokines such as TNFA and IL1B. Regulates cranial suture patterning and fusion. Activates transcription as a heterodimer with E proteins. Regulates gene expression differentially, depending on dimer composition. Homodimers induce expression of FGFR2 and POSTN while heterodimers repress FGFR2 and POSTN expression and induce THBS1 expression. Heterodimerization is also required for osteoblast differentiation. Represses the activity of the circadian transcriptional activator: NPAS2-BMAL1 heterodimer. In Microcebus murinus (Gray mouse lemur), this protein is Twist-related protein 1 (TWIST1).